We begin with the raw amino-acid sequence, 204 residues long: Holliday junction branch migration complex subunit RuvA (204 aa).

Positions 1-64 (MIGKLKGTID…EDQLKLFGFM (64 aa)) are domain I. Residues 65–143 (TALEREWFNL…AFAGEAINIG (79 aa)) are domain II. The interval 144–151 (LKQELGEG) is flexible linker. A domain III region spans residues 152 to 204 (VAAAPVADAVSALTNLGYSRDQAANAIAAAMKTAGEGADSAKLIRLGLKELAR).

Belongs to the RuvA family. In terms of assembly, homotetramer. Forms an RuvA(8)-RuvB(12)-Holliday junction (HJ) complex. HJ DNA is sandwiched between 2 RuvA tetramers; dsDNA enters through RuvA and exits via RuvB. An RuvB hexamer assembles on each DNA strand where it exits the tetramer. Each RuvB hexamer is contacted by two RuvA subunits (via domain III) on 2 adjacent RuvB subunits; this complex drives branch migration. In the full resolvosome a probable DNA-RuvA(4)-RuvB(12)-RuvC(2) complex forms which resolves the HJ.

Its subcellular location is the cytoplasm. Functionally, the RuvA-RuvB-RuvC complex processes Holliday junction (HJ) DNA during genetic recombination and DNA repair, while the RuvA-RuvB complex plays an important role in the rescue of blocked DNA replication forks via replication fork reversal (RFR). RuvA specifically binds to HJ cruciform DNA, conferring on it an open structure. The RuvB hexamer acts as an ATP-dependent pump, pulling dsDNA into and through the RuvAB complex. HJ branch migration allows RuvC to scan DNA until it finds its consensus sequence, where it cleaves and resolves the cruciform DNA. The polypeptide is Holliday junction branch migration complex subunit RuvA (Rhizobium johnstonii (strain DSM 114642 / LMG 32736 / 3841) (Rhizobium leguminosarum bv. viciae)).